Here is a 201-residue protein sequence, read N- to C-terminus: ADP-ribosylation factor-like protein 4D (201 aa).

G2 carries the N-myristoyl glycine lipid modification. GTP-binding positions include 28–35 (GLDSAGKT), 76–80 (DVGGQ), and 135–138 (NKQD).

The protein belongs to the small GTPase superfamily. Arf family. Interacts with CYTH2; the interaction is direct and ARL4D GTP-dependent. Does not interact with ARL4D.

It is found in the nucleus. It localises to the nucleolus. The protein localises to the cell membrane. The protein resides in the cytoplasm. Functionally, small GTP-binding protein which cycles between an inactive GDP-bound and an active GTP-bound form, and the rate of cycling is regulated by guanine nucleotide exchange factors (GEF) and GTPase-activating proteins (GAP). GTP-binding protein that does not act as an allosteric activator of the cholera toxin catalytic subunit. Recruits CYTH1, CYTH2, CYTH3 and CYTH4 to the plasma membrane in GDP-bound form. In Mus musculus (Mouse), this protein is ADP-ribosylation factor-like protein 4D (Arl4d).